We begin with the raw amino-acid sequence, 229 residues long: Potassium/proton antiporter CemA (229 aa).

A run of 3 helical transmembrane segments spans residues 7–27 (LNPLPYLASIVFLPWGISLSF), 106–126 (IILHFSTNITCFAILSAYSIL), and 189–209 (IISGLVSTFPVILDTILKYWI).

The protein belongs to the CemA family.

It is found in the plastid. The protein localises to the chloroplast inner membrane. The catalysed reaction is K(+)(in) + H(+)(out) = K(+)(out) + H(+)(in). In terms of biological role, contributes to K(+)/H(+) antiport activity by supporting proton efflux to control proton extrusion and homeostasis in chloroplasts in a light-dependent manner to modulate photosynthesis. Prevents excessive induction of non-photochemical quenching (NPQ) under continuous-light conditions. Indirectly promotes efficient inorganic carbon uptake into chloroplasts. This is Potassium/proton antiporter CemA from Nymphaea alba (White water-lily).